The sequence spans 332 residues: Adenine deaminase (332 aa).

Zn(2+)-binding residues include histidine 14, histidine 16, and histidine 194. Catalysis depends on glutamate 197, which acts as the Proton donor. Aspartate 275 is a binding site for Zn(2+). Aspartate 276 serves as a coordination point for substrate.

Belongs to the metallo-dependent hydrolases superfamily. Adenosine and AMP deaminases family. Adenine deaminase type 2 subfamily. Zn(2+) is required as a cofactor.

The catalysed reaction is adenine + H2O + H(+) = hypoxanthine + NH4(+). Functionally, catalyzes the hydrolytic deamination of adenine to hypoxanthine. Plays an important role in the purine salvage pathway and in nitrogen catabolism. The sequence is that of Adenine deaminase from Psychrobacter cryohalolentis (strain ATCC BAA-1226 / DSM 17306 / VKM B-2378 / K5).